Here is a 199-residue protein sequence, read N- to C-terminus: Elongation factor Ts (199 aa).

An involved in Mg(2+) ion dislocation from EF-Tu region spans residues 82 to 85 (TDFV).

The protein belongs to the EF-Ts family.

Its subcellular location is the cytoplasm. Functionally, associates with the EF-Tu.GDP complex and induces the exchange of GDP to GTP. It remains bound to the aminoacyl-tRNA.EF-Tu.GTP complex up to the GTP hydrolysis stage on the ribosome. The chain is Elongation factor Ts from Leptospira interrogans serogroup Icterohaemorrhagiae serovar Lai (strain 56601).